Consider the following 109-residue polypeptide: Spermidine export protein MdtI (109 aa).

The next 4 membrane-spanning stretches (helical) occupy residues 6 to 26 (WVHA…NVFL), 36 to 56 (IFGL…SQAV), 64 to 84 (AYAL…WILF), and 88 to 108 (LNRK…MVKL).

This sequence belongs to the drug/metabolite transporter (DMT) superfamily. Small multidrug resistance (SMR) (TC 2.A.7.1) family. MdtI subfamily. In terms of assembly, forms a complex with MdtJ.

The protein resides in the cell inner membrane. In terms of biological role, catalyzes the excretion of spermidine. The polypeptide is Spermidine export protein MdtI (Escherichia coli O81 (strain ED1a)).